A 400-amino-acid chain; its full sequence is Cysteine desulfurase 1 (400 aa).

Residues 71–72, N150, Q178, and 198–200 contribute to the pyridoxal 5'-phosphate site; these read GT and SGH. At K201 the chain carries N6-(pyridoxal phosphate)lysine. T236 contacts pyridoxal 5'-phosphate. The active-site Cysteine persulfide intermediate is the C324. A [2Fe-2S] cluster-binding site is contributed by C324.

The protein belongs to the class-V pyridoxal-phosphate-dependent aminotransferase family. NifS/IscS subfamily. Homodimer. It depends on pyridoxal 5'-phosphate as a cofactor.

The catalysed reaction is (sulfur carrier)-H + L-cysteine = (sulfur carrier)-SH + L-alanine. Catalyzes the removal of elemental sulfur atoms from cysteine to produce alanine. Seems to participate in the biosynthesis of the nitrogenase metalloclusters by providing the inorganic sulfur required for the Fe-S core formation. The polypeptide is Cysteine desulfurase 1 (Trichormus variabilis (strain ATCC 29413 / PCC 7937) (Anabaena variabilis)).